The sequence spans 125 residues: Holo-[acyl-carrier-protein] synthase (125 aa).

The Mg(2+) site is built by D6 and E55.

It belongs to the P-Pant transferase superfamily. AcpS family. Mg(2+) serves as cofactor.

It is found in the cytoplasm. It catalyses the reaction apo-[ACP] + CoA = holo-[ACP] + adenosine 3',5'-bisphosphate + H(+). Its function is as follows. Transfers the 4'-phosphopantetheine moiety from coenzyme A to a Ser of acyl-carrier-protein. The polypeptide is Holo-[acyl-carrier-protein] synthase (Chlorobium phaeovibrioides (strain DSM 265 / 1930) (Prosthecochloris vibrioformis (strain DSM 265))).